Here is a 256-residue protein sequence, read N- to C-terminus: Protein YABBY 4 (256 aa).

The C4-type zinc-finger motif lies at 30 to 57 (CNCCDTILAVGVPCSSLFKTVTVRCGHC). Positions 127 to 168 (SCASNAPAMQMPPAKPVQQEPELPKNAPASANRPPEKRQRVP) are disordered.

It belongs to the YABBY family. In terms of tissue distribution, preferentially expressed in immature organs containing meristems and organ primordia. Expressed in phloem of developing vascular tissues of young seedling shoots. Expressed in the phloem of midvein vasculature of young leaves. Does not show polar expression pattern in leaf primordia.

Its subcellular location is the nucleus. Its function is as follows. Seems to be associated with phloem cell differentiation. The protein is Protein YABBY 4 (YAB4) of Oryza sativa subsp. japonica (Rice).